Reading from the N-terminus, the 61-residue chain is 14-3-3-like protein (61 aa).

This sequence belongs to the 14-3-3 family.

This chain is 14-3-3-like protein, found in Zea mays (Maize).